We begin with the raw amino-acid sequence, 350 residues long: Homeobox-leucine zipper protein HOX5 (350 aa).

A DNA-binding region (homeobox) is located at residues 83-142; it reads APEKKRRLTAEQVQMLERSFEEENKLEPERKTELARRLGMAPRQVAVWFQNRRARWKTKQ. Residues 141–185 form a leucine-zipper region; the sequence is KQLEHDFDRLKAAYDALAADHHALLSDNDRLRAQVISLTEKLQDK. The tract at residues 180–254 is disordered; the sequence is EKLQDKETSP…TNDDGDGGGA (75 aa). Over residues 188 to 198 the composition is skewed to low complexity; the sequence is SPSSATITTAA.

Belongs to the HD-ZIP homeobox family. Class I subfamily. Homodimer. May form a heterodimer with HOX4. Expressed in seedlings, roots, leaves, nodes, internodes, flowers and embryo.

The protein resides in the nucleus. Probable transcription activator that binds to the DNA sequence 5'-CAAT[AT]ATTG-3'. The protein is Homeobox-leucine zipper protein HOX5 (HOX5) of Oryza sativa subsp. indica (Rice).